A 166-amino-acid chain; its full sequence is Shikimate kinase (166 aa).

11–16 (GSGKST) provides a ligand contact to ATP. A Mg(2+)-binding site is contributed by Ser-15. Residues Asp-33, Arg-57, and Gly-79 each contribute to the substrate site. Residue Arg-117 participates in ATP binding. Substrate is bound at residue Arg-134.

It belongs to the shikimate kinase family. As to quaternary structure, monomer. The cofactor is Mg(2+).

The protein localises to the cytoplasm. The enzyme catalyses shikimate + ATP = 3-phosphoshikimate + ADP + H(+). It functions in the pathway metabolic intermediate biosynthesis; chorismate biosynthesis; chorismate from D-erythrose 4-phosphate and phosphoenolpyruvate: step 5/7. Catalyzes the specific phosphorylation of the 3-hydroxyl group of shikimic acid using ATP as a cosubstrate. This Sulfurihydrogenibium sp. (strain YO3AOP1) protein is Shikimate kinase.